A 227-amino-acid chain; its full sequence is Cytochrome c oxidase subunit 2 (227 aa).

Over 1–14 (MAYPFQLGLQDATS) the chain is Mitochondrial intermembrane. The chain crosses the membrane as a helical span at residues 15–45 (PIMEELLHFHDHTLMIVFLISSLVLYIISLM). The Mitochondrial matrix segment spans residues 46–59 (LTTKLTHTSTMDAQ). Residues 60–87 (EVETVWTILPAIILILIALLSLRILYMM) form a helical membrane-spanning segment. Residues 88–227 (DEINNPFLTM…YFETWSALMV (140 aa)) lie on the Mitochondrial intermembrane side of the membrane. Cu cation is bound by residues histidine 161, cysteine 196, glutamate 198, cysteine 200, histidine 204, and methionine 207. Glutamate 198 lines the Mg(2+) pocket. Position 218 is a phosphotyrosine (tyrosine 218).

The protein belongs to the cytochrome c oxidase subunit 2 family. As to quaternary structure, component of the cytochrome c oxidase (complex IV, CIV), a multisubunit enzyme composed of 14 subunits. The complex is composed of a catalytic core of 3 subunits MT-CO1, MT-CO2 and MT-CO3, encoded in the mitochondrial DNA, and 11 supernumerary subunits COX4I, COX5A, COX5B, COX6A, COX6B, COX6C, COX7A, COX7B, COX7C, COX8 and NDUFA4, which are encoded in the nuclear genome. The complex exists as a monomer or a dimer and forms supercomplexes (SCs) in the inner mitochondrial membrane with NADH-ubiquinone oxidoreductase (complex I, CI) and ubiquinol-cytochrome c oxidoreductase (cytochrome b-c1 complex, complex III, CIII), resulting in different assemblies (supercomplex SCI(1)III(2)IV(1) and megacomplex MCI(2)III(2)IV(2)). Found in a complex with TMEM177, COA6, COX18, COX20, SCO1 and SCO2. Interacts with TMEM177 in a COX20-dependent manner. Interacts with COX20. Interacts with COX16. Cu cation is required as a cofactor.

The protein localises to the mitochondrion inner membrane. The catalysed reaction is 4 Fe(II)-[cytochrome c] + O2 + 8 H(+)(in) = 4 Fe(III)-[cytochrome c] + 2 H2O + 4 H(+)(out). In terms of biological role, component of the cytochrome c oxidase, the last enzyme in the mitochondrial electron transport chain which drives oxidative phosphorylation. The respiratory chain contains 3 multisubunit complexes succinate dehydrogenase (complex II, CII), ubiquinol-cytochrome c oxidoreductase (cytochrome b-c1 complex, complex III, CIII) and cytochrome c oxidase (complex IV, CIV), that cooperate to transfer electrons derived from NADH and succinate to molecular oxygen, creating an electrochemical gradient over the inner membrane that drives transmembrane transport and the ATP synthase. Cytochrome c oxidase is the component of the respiratory chain that catalyzes the reduction of oxygen to water. Electrons originating from reduced cytochrome c in the intermembrane space (IMS) are transferred via the dinuclear copper A center (CU(A)) of subunit 2 and heme A of subunit 1 to the active site in subunit 1, a binuclear center (BNC) formed by heme A3 and copper B (CU(B)). The BNC reduces molecular oxygen to 2 water molecules using 4 electrons from cytochrome c in the IMS and 4 protons from the mitochondrial matrix. In Nyctereutes procyonoides (Raccoon dog), this protein is Cytochrome c oxidase subunit 2 (MT-CO2).